Here is a 284-residue protein sequence, read N- to C-terminus: Protease HtpX homolog (284 aa).

2 helical membrane passes run T7–H26 and I33–S47. Position 129 (H129) interacts with Zn(2+). The active site involves E130. H133 contributes to the Zn(2+) binding site. A run of 2 helical transmembrane segments spans residues L148–V168 and I180–I200. E205 lines the Zn(2+) pocket.

This sequence belongs to the peptidase M48B family. Requires Zn(2+) as cofactor.

It localises to the cell membrane. This Methanocaldococcus jannaschii (strain ATCC 43067 / DSM 2661 / JAL-1 / JCM 10045 / NBRC 100440) (Methanococcus jannaschii) protein is Protease HtpX homolog.